Here is a 56-residue protein sequence, read N- to C-terminus: Ferredoxin (56 aa).

2 consecutive 4Fe-4S ferredoxin-type domains span residues 2–29 (AYVINDSCISCGACEPECPVNAITAGDD) and 29–56 (DKYVIDAATCIDCGACAGVCPVDAPQPE). [4Fe-4S] cluster-binding residues include Cys-9, Cys-12, Cys-15, Cys-19, Cys-38, Cys-41, Cys-44, and Cys-48.

[4Fe-4S] cluster is required as a cofactor.

Ferredoxins are iron-sulfur proteins that transfer electrons in a wide variety of metabolic reactions. The protein is Ferredoxin of Acetoanaerobium sticklandii (strain ATCC 12662 / DSM 519 / JCM 1433 / CCUG 9281 / NCIMB 10654 / HF) (Clostridium sticklandii).